Consider the following 407-residue polypeptide: Tryptophan synthase beta chain (407 aa).

K91 carries the N6-(pyridoxal phosphate)lysine modification.

It belongs to the TrpB family. In terms of assembly, tetramer of two alpha and two beta chains. It depends on pyridoxal 5'-phosphate as a cofactor.

It carries out the reaction (1S,2R)-1-C-(indol-3-yl)glycerol 3-phosphate + L-serine = D-glyceraldehyde 3-phosphate + L-tryptophan + H2O. It participates in amino-acid biosynthesis; L-tryptophan biosynthesis; L-tryptophan from chorismate: step 5/5. The beta subunit is responsible for the synthesis of L-tryptophan from indole and L-serine. This chain is Tryptophan synthase beta chain, found in Streptococcus pneumoniae (strain 70585).